A 283-amino-acid polypeptide reads, in one-letter code: Non-selective voltage-gated ion channel VDAC3 (283 aa).

At Cys-2 the chain carries N-acetylcysteine. Thr-4 bears the Phosphothreonine mark. N6-acetyllysine is present on residues Lys-12, Lys-15, and Lys-20. 2 beta stranded membrane passes run Met-26–Ser-35 and Val-39–Ala-47. Residues Lys-53 and Lys-61 each participate in a glycyl lysine isopeptide (Lys-Gly) (interchain with G-Cter in ubiquitin) cross-link. The next 3 membrane-spanning stretches (beta stranded) occupy residues Ala-54–Val-64, Leu-69–Asn-76, and Thr-80–Asn-89. At Lys-90 the chain carries N6-acetyllysine. A beta stranded membrane pass occupies residues Leu-95–Val-104. Residues Lys-109 and Lys-110 each participate in a glycyl lysine isopeptide (Lys-Gly) (interchain with G-Cter in ubiquitin) cross-link. The next 10 membrane-spanning stretches (beta stranded) occupy residues Ser-111–Arg-120, Phe-123–Asp-130, Thr-137–Ala-145, Leu-150–Asp-158, Lys-163–Ala-175, Phe-178–Asn-185, Glu-189–Val-198, Ile-202–Thr-211, Arg-218–Leu-227, and Thr-231–Asn-238. Lys-163 is covalently cross-linked (Glycyl lysine isopeptide (Lys-Gly) (interchain with G-Cter in ubiquitin)). Ser-241 carries the post-translational modification Phosphoserine. Residues Leu-242–Gly-244 and Ser-260–Asp-264 contribute to the NAD(+) site. The next 2 membrane-spanning stretches (beta stranded) occupy residues Leu-242 to Leu-251 and Gly-254 to Ile-263. Lys-266 carries the post-translational modification N6-acetyllysine; alternate. Lys-266 is covalently cross-linked (Glycyl lysine isopeptide (Lys-Gly) (interchain with G-Cter in ubiquitin); alternate). A beta stranded transmembrane segment spans residues His-273–Glu-282. Lys-274 participates in a covalent cross-link: Glycyl lysine isopeptide (Lys-Gly) (interchain with G-Cter in ubiquitin).

Belongs to the eukaryotic mitochondrial porin family. As to quaternary structure, interacts with ARMC12 in a TBC1D21-dependent manner. Interacts with MISFA. Ubiquitinated by PRKN during mitophagy, leading to its degradation and enhancement of mitophagy. Deubiquitinated by USP30. As to expression, expressed in erythrocytes (at protein level). Widely expressed. Highest in testis.

The protein localises to the mitochondrion outer membrane. It is found in the membrane. It carries out the reaction chloride(in) = chloride(out). The enzyme catalyses K(+)(in) = K(+)(out). In terms of biological role, non-selective voltage-gated ion channel that mediates the transport of anions and cations through the mitochondrion outer membrane and plasma membrane. Forms a high-conducting channel with a stable open state and a voltage-induced closure with a mild preference for anions over cations. Involved in male fertility and sperm mitochondrial sheath formation. The chain is Non-selective voltage-gated ion channel VDAC3 from Homo sapiens (Human).